Reading from the N-terminus, the 394-residue chain is General receptor for phosphoinositides 1-associated scaffold protein (394 aa).

The disordered stretch occupies residues 1 to 51; the sequence is MTLRRLRKLQQKEEATAAPDLAGRAPDSEAARAAPTPSGPPAAAAPPGAPG. Positions 37-49 are enriched in pro residues; sequence PSGPPAAAAPPGA. The residue at position 76 (T76) is a Phosphothreonine. S93 is modified (phosphoserine). The region spanning 100 to 189 is the PDZ domain; sequence VLTLEKGDNQ…VLRLETLYGT (90 aa). Residues 180 to 257 form an interaction with PSCD3 region; that stretch reads VLRLETLYGT…GAGLLPGSLP (78 aa). The residue at position 236 (Y236) is a Phosphotyrosine. R269 is subject to Omega-N-methylarginine. The tract at residues 293 to 318 is disordered; it reads EPQALPPPPPPARAPGPGSAETPASV. The segment covering 296 to 306 has biased composition (pro residues); sequence ALPPPPPPARA. A Phosphoserine modification is found at S386.

As to quaternary structure, heteromer. Composed of TAMALIN, CYTH2 and at least one GRM1. Also interacts with CYTH3, GRM2, GRM3 and GRM5. In terms of tissue distribution, expressed in brain.

Its subcellular location is the cytoplasm. It localises to the perinuclear region. The protein localises to the cell membrane. The protein resides in the postsynaptic cell membrane. In terms of biological role, plays a role in intracellular trafficking and contributes to the macromolecular organization of group 1 metabotropic glutamate receptors (mGluRs) at synapses. This chain is General receptor for phosphoinositides 1-associated scaffold protein, found in Rattus norvegicus (Rat).